The chain runs to 808 residues: Protein translocase subunit SecA 2 (808 aa).

ATP contacts are provided by residues Gln124, 142–146 (GEGKT), and Asp535.

The protein belongs to the SecA family. Monomer and homodimer. Part of the essential Sec protein translocation apparatus which comprises SecA, SecYEG and auxiliary proteins SecDF. Other proteins may also be involved.

The protein resides in the cell membrane. It is found in the cytoplasm. It catalyses the reaction ATP + H2O + cellular proteinSide 1 = ADP + phosphate + cellular proteinSide 2.. Its function is as follows. Part of the Sec protein translocase complex. Interacts with the SecYEG preprotein conducting channel. Has a central role in coupling the hydrolysis of ATP to the transfer of proteins into and across the cell membrane, serving as an ATP-driven molecular motor driving the stepwise translocation of polypeptide chains across the membrane. The polypeptide is Protein translocase subunit SecA 2 (Mycobacterium bovis (strain BCG / Pasteur 1173P2)).